We begin with the raw amino-acid sequence, 440 residues long: D-serine dehydratase (440 aa).

The residue at position 116 (Lys-116) is an N6-(pyridoxal phosphate)lysine.

Belongs to the serine/threonine dehydratase family. DsdA subfamily. In terms of assembly, monomer. Pyridoxal 5'-phosphate is required as a cofactor.

It catalyses the reaction D-serine = pyruvate + NH4(+). This is D-serine dehydratase from Salmonella arizonae (strain ATCC BAA-731 / CDC346-86 / RSK2980).